We begin with the raw amino-acid sequence, 265 residues long: Tryptophan synthase alpha chain (265 aa).

Active-site proton acceptor residues include Glu49 and Asp60.

It belongs to the TrpA family. In terms of assembly, tetramer of two alpha and two beta chains.

The enzyme catalyses (1S,2R)-1-C-(indol-3-yl)glycerol 3-phosphate + L-serine = D-glyceraldehyde 3-phosphate + L-tryptophan + H2O. It functions in the pathway amino-acid biosynthesis; L-tryptophan biosynthesis; L-tryptophan from chorismate: step 5/5. Its function is as follows. The alpha subunit is responsible for the aldol cleavage of indoleglycerol phosphate to indole and glyceraldehyde 3-phosphate. This is Tryptophan synthase alpha chain from Polynucleobacter necessarius subsp. necessarius (strain STIR1).